We begin with the raw amino-acid sequence, 156 residues long: Small ribosomal subunit protein uS7 (156 aa).

It belongs to the universal ribosomal protein uS7 family. Part of the 30S ribosomal subunit. Contacts proteins S9 and S11.

Its function is as follows. One of the primary rRNA binding proteins, it binds directly to 16S rRNA where it nucleates assembly of the head domain of the 30S subunit. Is located at the subunit interface close to the decoding center, probably blocks exit of the E-site tRNA. In Geobacillus sp. (strain WCH70), this protein is Small ribosomal subunit protein uS7.